Consider the following 441-residue polypeptide: Protein translocase subunit SecY (441 aa).

10 helical membrane-spanning segments follow: residues 24–44 (LFVLGALIVYRIGSFIPVPGI), 77–97 (ILALGIMPYISASIVIQLLAT), 123–143 (ATVVFATIQAVAISTGLPNML), 152–172 (FSFYFTSVVSLVTGTMFLMWL), 181–201 (IGNGISILVFGGIVAGLPSAI), 215–235 (PLVLLLIAAIVFAVTYFVVFV), 272–292 (VMPAIFASSIILFPATLTQWF), 313–333 (PLYLLVYAVAIIFFSFFYTAM), 373–393 (LIGGLYVTFVCLVPYIMTSAW), and 397–417 (FYFGGTSLLIVVVVIMDFIVQ).

It belongs to the SecY/SEC61-alpha family. Component of the Sec protein translocase complex. Heterotrimer consisting of SecY, SecE and SecG subunits. The heterotrimers can form oligomers, although 1 heterotrimer is thought to be able to translocate proteins. Interacts with the ribosome. Interacts with SecDF, and other proteins may be involved. Interacts with SecA.

Its subcellular location is the cell inner membrane. The central subunit of the protein translocation channel SecYEG. Consists of two halves formed by TMs 1-5 and 6-10. These two domains form a lateral gate at the front which open onto the bilayer between TMs 2 and 7, and are clamped together by SecE at the back. The channel is closed by both a pore ring composed of hydrophobic SecY resides and a short helix (helix 2A) on the extracellular side of the membrane which forms a plug. The plug probably moves laterally to allow the channel to open. The ring and the pore may move independently. This Haemophilus influenzae (strain ATCC 51907 / DSM 11121 / KW20 / Rd) protein is Protein translocase subunit SecY.